The primary structure comprises 561 residues: DNA ligase B (561 aa).

The active-site N6-AMP-lysine intermediate is the Lys125.

Belongs to the NAD-dependent DNA ligase family. LigB subfamily.

The catalysed reaction is NAD(+) + (deoxyribonucleotide)n-3'-hydroxyl + 5'-phospho-(deoxyribonucleotide)m = (deoxyribonucleotide)n+m + AMP + beta-nicotinamide D-nucleotide.. Catalyzes the formation of phosphodiester linkages between 5'-phosphoryl and 3'-hydroxyl groups in double-stranded DNA using NAD as a coenzyme and as the energy source for the reaction. This is DNA ligase B from Salmonella schwarzengrund (strain CVM19633).